Consider the following 343-residue polypeptide: Programmed cell death protein 2 (343 aa).

Zn(2+) is bound by residues Cys134, Cys137, Cys145, Cys148, Cys154, His158, His167, and Cys171. The segment at 134 to 171 (CRVCGCLAPMTCSRCKQAHYCSKEHQTLDWRLGHKQAC) adopts an MYND-type; atypical zinc-finger fold.

In terms of processing, ubiquitinated by PRKN, promoting proteasomal degradation.

It is found in the nucleus. May be a DNA-binding protein with a regulatory function. May play an important role in cell death and/or in regulation of cell proliferation. This Mus musculus (Mouse) protein is Programmed cell death protein 2 (Pdcd2).